Consider the following 736-residue polypeptide: Centrosomal protein kizuna (736 aa).

Residues histidine 10–glutamine 35 are a coiled coil. Polar residues predominate over residues asparagine 192–serine 208. Disordered stretches follow at residues asparagine 192–leucine 238, serine 279–serine 305, glutamate 323–proline 348, and threonine 642–threonine 690. Positions glutamate 210–isoleucine 219 are enriched in basic and acidic residues. The span at leucine 328 to serine 339 shows a compositional bias: polar residues. Over residues serine 658–serine 668 the composition is skewed to low complexity. Residues isoleucine 678 to threonine 690 show a composition bias toward polar residues.

The protein belongs to the kizuna family.

Its subcellular location is the cytoplasm. It localises to the cytoskeleton. It is found in the microtubule organizing center. The protein resides in the centrosome. The protein localises to the cilium basal body. Functionally, centrosomal protein required for establishing a robust mitotic centrosome architecture that can endure the forces that converge on the centrosomes during spindle formation. Required for stabilizing the expanded pericentriolar material around the centriole. This Xenopus laevis (African clawed frog) protein is Centrosomal protein kizuna (kiz).